The following is a 495-amino-acid chain: MPTESASCSTARQTKQKRKSHSLSIRRTNSSEQERTGLPRDMLEGQDSKLPSSVRSTLLELFGQIEREFENLYIENLELRREIDTLNERLAAEGQAIDGAELSKGQLKTKASHSTSQLSQKLKTTYKASTSKIVSSFKTTTSRAACQLVKEYIGHRDGIWDVSVAKTQPVVLGTASADHTALLWSIETGKCLVKYAGHVGSVNSIKFHPSEQLALTASGDQTAHIWRYAVQLPTPQPVADTSQISGEDEVECSDKDEPDLDGDVSSDCPTIRVPLTSLKSHQGVVIAADWLVGGKQAVTASWDRTANLYDVETSELVHSLTGHDQELTHCCTHPTQRLVVTSSRDTTFRLWDFRDPSIHSVNVFQGHTDTVTSAVFTVGDNVVSGSDDRTVKVWDLKNMRSPIATIRTDSAINRINVCVGQKIIALPHDNRQVRLFDMSGVRLARLPRSSRQGHRRMVCCSAWSEDHPVCNLFTCGFDRQAIGWNINIPALLQEK.

2 stretches are compositionally biased toward polar residues: residues methionine 1 to glutamine 13 and serine 22 to serine 31. The tract at residues methionine 1 to leucine 50 is disordered. Basic and acidic residues predominate over residues glutamate 32–aspartate 47. 2 WD repeats span residues glycine 154–lysine 194 and glycine 197–glutamine 236. Residues proline 237–serine 266 form a disordered region. The span at glycine 246–valine 264 shows a compositional bias: acidic residues. WD repeat units follow at residues serine 280–serine 319, glycine 322–valine 361, glycine 366–alanine 404, arginine 407–leucine 446, and glycine 453–glutamate 494.

In terms of assembly, forms homodimers. Interacts with PACS1. Interacts with PACS2.

It localises to the cytoplasm. The protein localises to the nucleus. Its function is as follows. Required for normal ER Ca2+ handling in lymphocytes. Together with PACS1, it plays an essential role in stabilizing peripheral lymphocyte populations. In Pongo abelii (Sumatran orangutan), this protein is WD repeat-containing protein 37 (WDR37).